A 120-amino-acid polypeptide reads, in one-letter code: NAD(P)H-quinone oxidoreductase subunit 3, chloroplastic (120 aa).

Transmembrane regions (helical) follow at residues 7 to 27 (YETF…AFLI), 64 to 84 (MFAL…PWAM), and 88 to 108 (ILGI…IVGS).

The protein belongs to the complex I subunit 3 family. NDH is composed of at least 16 different subunits, 5 of which are encoded in the nucleus.

Its subcellular location is the plastid. The protein localises to the chloroplast thylakoid membrane. It catalyses the reaction a plastoquinone + NADH + (n+1) H(+)(in) = a plastoquinol + NAD(+) + n H(+)(out). It carries out the reaction a plastoquinone + NADPH + (n+1) H(+)(in) = a plastoquinol + NADP(+) + n H(+)(out). Functionally, NDH shuttles electrons from NAD(P)H:plastoquinone, via FMN and iron-sulfur (Fe-S) centers, to quinones in the photosynthetic chain and possibly in a chloroplast respiratory chain. The immediate electron acceptor for the enzyme in this species is believed to be plastoquinone. Couples the redox reaction to proton translocation, and thus conserves the redox energy in a proton gradient. This is NAD(P)H-quinone oxidoreductase subunit 3, chloroplastic from Cycas taitungensis (Prince sago).